Consider the following 161-residue polypeptide: Cyclic pyranopterin monophosphate synthase (161 aa).

Substrate is bound by residues 73–75 (LCH) and 110–111 (ME). D125 is a catalytic residue.

This sequence belongs to the MoaC family. In terms of assembly, homohexamer; trimer of dimers.

The catalysed reaction is (8S)-3',8-cyclo-7,8-dihydroguanosine 5'-triphosphate = cyclic pyranopterin phosphate + diphosphate. The protein operates within cofactor biosynthesis; molybdopterin biosynthesis. Functionally, catalyzes the conversion of (8S)-3',8-cyclo-7,8-dihydroguanosine 5'-triphosphate to cyclic pyranopterin monophosphate (cPMP). The chain is Cyclic pyranopterin monophosphate synthase from Pseudomonas savastanoi pv. phaseolicola (strain 1448A / Race 6) (Pseudomonas syringae pv. phaseolicola (strain 1448A / Race 6)).